The chain runs to 542 residues: Putative cysteine ligase BshC (542 aa).

Residues 458 to 487 (VAKNAAIIQAQIEFLQQTLERALLSKHEVE) adopt a coiled-coil conformation.

The protein belongs to the BshC family.

Involved in bacillithiol (BSH) biosynthesis. May catalyze the last step of the pathway, the addition of cysteine to glucosamine malate (GlcN-Mal) to generate BSH. The polypeptide is Putative cysteine ligase BshC (Geobacillus thermodenitrificans (strain NG80-2)).